The following is a 232-amino-acid chain: Uracil-DNA glycosylase (232 aa).

The active-site Proton acceptor is Asp-70.

This sequence belongs to the uracil-DNA glycosylase (UDG) superfamily. UNG family.

It localises to the cytoplasm. It catalyses the reaction Hydrolyzes single-stranded DNA or mismatched double-stranded DNA and polynucleotides, releasing free uracil.. Excises uracil residues from the DNA which can arise as a result of misincorporation of dUMP residues by DNA polymerase or due to deamination of cytosine. The protein is Uracil-DNA glycosylase of Campylobacter fetus subsp. fetus (strain 82-40).